Here is a 419-residue protein sequence, read N- to C-terminus: Putative Bro-N domain-containing protein 201R (419 aa).

Residues 4-136 (LINLKDCKEY…KILPSIRKYG (133 aa)) form the Bro-N domain. The stretch at 150 to 195 (QLALKDKSEEELQIKLQEERIEKENAYMKLRSEAKRHKEQIKRTLE) forms a coiled coil.

This sequence belongs to the IIV-6 201R/289L family.

The chain is Putative Bro-N domain-containing protein 201R from Acheta domesticus (House cricket).